Reading from the N-terminus, the 64-residue chain is Alpha-conotoxin-like Ai1.2 (64 aa).

The first 17 residues, 1–17, serve as a signal peptide directing secretion; sequence MFTVFLLVVLATTVVSS. The propeptide occupies 18-43; it reads TSGRRAFRGRNAAAKASGLVGLTDRR. Disulfide bonds link Cys-46/Cys-52 and Cys-47/Cys-60. Residues 48–50 form a ser-Xaa-Pro motif, crucial for potent interaction with nAChR region; it reads SDP. Gly-61 carries the post-translational modification Glycine amide.

The protein belongs to the conotoxin A superfamily. In terms of tissue distribution, expressed by the venom duct.

The protein resides in the secreted. In terms of biological role, alpha-conotoxins act on postsynaptic membranes, they bind to the nicotinic acetylcholine receptors (nAChR) and thus inhibit them. The protein is Alpha-conotoxin-like Ai1.2 of Conus ammiralis (Admiral cone).